Here is a 310-residue protein sequence, read N- to C-terminus: tRNA dimethylallyltransferase (310 aa).

12–19 (GPTATGKT) serves as a coordination point for ATP. 14 to 19 (TATGKT) is a binding site for substrate. Positions 37–40 (DSMM) are interaction with substrate tRNA.

Belongs to the IPP transferase family. As to quaternary structure, monomer. The cofactor is Mg(2+).

The catalysed reaction is adenosine(37) in tRNA + dimethylallyl diphosphate = N(6)-dimethylallyladenosine(37) in tRNA + diphosphate. Functionally, catalyzes the transfer of a dimethylallyl group onto the adenine at position 37 in tRNAs that read codons beginning with uridine, leading to the formation of N6-(dimethylallyl)adenosine (i(6)A). The protein is tRNA dimethylallyltransferase of Desulforudis audaxviator (strain MP104C).